The primary structure comprises 355 residues: Lipopolysaccharide heptosyltransferase 1 (355 aa).

The ADP-L-glycero-beta-D-manno-heptose site is built by threonine 186, threonine 187, lysine 191, glutamate 221, aspartate 260, threonine 261, glycine 262, and histidine 265.

It belongs to the glycosyltransferase 9 family.

The protein localises to the cell inner membrane. The enzyme catalyses an alpha-Kdo-(2-&gt;4)-alpha-Kdo-(2-&gt;6)-lipid A + ADP-L-glycero-beta-D-manno-heptose = an L-alpha-D-Hep-(1-&gt;5)-[alpha-Kdo-(2-&gt;4)]-alpha-Kdo-(2-&gt;6)-lipid A + ADP + H(+). Its pathway is bacterial outer membrane biogenesis; LPS core biosynthesis. Glycosyltransferase involved in the biosynthesis of the core oligosaccharide region of lipopolysaccharide (LPS). Catalyzes the addition of the first heptose unit to one 3-deoxy-D-manno-octulosonic acid (Kdo) residue of the Kdo2-lipid A module. This is Lipopolysaccharide heptosyltransferase 1 from Pseudomonas aeruginosa (strain ATCC 15692 / DSM 22644 / CIP 104116 / JCM 14847 / LMG 12228 / 1C / PRS 101 / PAO1).